The primary structure comprises 262 residues: ATP synthase subunit a (262 aa).

7 helical membrane-spanning segments follow: residues 30–50 (ITSL…LTIF), 64–84 (WNIV…DQIG), 91–111 (LIYF…NILG), 123–143 (ISVT…IGFS), 149–169 (FFSL…LVLI), 195–215 (LFGV…SILL), and 220–240 (IGLP…VALL).

The protein belongs to the ATPase A chain family. F-type ATPases have 2 components, CF(1) - the catalytic core - and CF(0) - the membrane proton channel. CF(1) has five subunits: alpha(3), beta(3), gamma(1), delta(1), epsilon(1). CF(0) has three main subunits: a, b and c.

It is found in the mitochondrion inner membrane. Its function is as follows. Mitochondrial membrane ATP synthase (F(1)F(0) ATP synthase or Complex V) produces ATP from ADP in the presence of a proton gradient across the membrane which is generated by electron transport complexes of the respiratory chain. F-type ATPases consist of two structural domains, F(1) - containing the extramembraneous catalytic core and F(0) - containing the membrane proton channel, linked together by a central stalk and a peripheral stalk. During catalysis, ATP synthesis in the catalytic domain of F(1) is coupled via a rotary mechanism of the central stalk subunits to proton translocation. Key component of the proton channel; it may play a direct role in the translocation of protons across the membrane. In Allomyces arbusculus (Aquatic fungus), this protein is ATP synthase subunit a (ATP6).